We begin with the raw amino-acid sequence, 62 residues long: Photosystem II reaction center protein Z (62 aa).

2 helical membrane-spanning segments follow: residues 8 to 28 (SVFA…VVLA) and 41 to 61 (FSGA…NSFI).

This sequence belongs to the PsbZ family. As to quaternary structure, PSII is composed of 1 copy each of membrane proteins PsbA, PsbB, PsbC, PsbD, PsbE, PsbF, PsbH, PsbI, PsbJ, PsbK, PsbL, PsbM, PsbT, PsbY, PsbZ, Psb30/Ycf12, at least 3 peripheral proteins of the oxygen-evolving complex and a large number of cofactors. It forms dimeric complexes.

The protein localises to the plastid. It is found in the chloroplast thylakoid membrane. May control the interaction of photosystem II (PSII) cores with the light-harvesting antenna, regulates electron flow through the 2 photosystem reaction centers. PSII is a light-driven water plastoquinone oxidoreductase, using light energy to abstract electrons from H(2)O, generating a proton gradient subsequently used for ATP formation. This is Photosystem II reaction center protein Z from Chaetosphaeridium globosum (Charophycean green alga).